The primary structure comprises 344 residues: MSNTQLSYKDAGVDIHAGNELVERIKGDVKRTNRSEVMGGLGGFGALCALPTKYKEPILVSGTDGVGTKLRLAIDLKKHDTIGQDLVAMCVNDLIVQGAEPLFFLDYYATGKLDVDVAASVIKGIAYGCEMSGCALVGGETAEMPGMYHEGDYDLAGFCVGVVEKSEIIDGTAVKTGDTLIALGSSGAHSNGYSLIRKVLEVSGANPADLLEGKPLSEHFLAPTKIYVKSILQLIKQTEVHAIAHLTGGGFWENIPRVLPDNTKAVIDESSWQWPAIFNWLQEKGNISRYEMYRTFNCGVGMVIALPEKEVETALALLEQSGEKAWVIGKIEHLGEGEAQVEIQ.

This sequence belongs to the AIR synthase family.

The protein localises to the cytoplasm. The enzyme catalyses 2-formamido-N(1)-(5-O-phospho-beta-D-ribosyl)acetamidine + ATP = 5-amino-1-(5-phospho-beta-D-ribosyl)imidazole + ADP + phosphate + H(+). The protein operates within purine metabolism; IMP biosynthesis via de novo pathway; 5-amino-1-(5-phospho-D-ribosyl)imidazole from N(2)-formyl-N(1)-(5-phospho-D-ribosyl)glycinamide: step 2/2. The sequence is that of Phosphoribosylformylglycinamidine cyclo-ligase from Haemophilus influenzae (strain PittEE).